The chain runs to 89 residues: Small ribosomal subunit protein uS15 (89 aa).

Positions 1-23 (MTLNTEAKQKIINKHQTHGTDTG) are disordered.

It belongs to the universal ribosomal protein uS15 family. As to quaternary structure, part of the 30S ribosomal subunit. Forms a bridge to the 50S subunit in the 70S ribosome, contacting the 23S rRNA.

In terms of biological role, one of the primary rRNA binding proteins, it binds directly to 16S rRNA where it helps nucleate assembly of the platform of the 30S subunit by binding and bridging several RNA helices of the 16S rRNA. Forms an intersubunit bridge (bridge B4) with the 23S rRNA of the 50S subunit in the ribosome. The sequence is that of Small ribosomal subunit protein uS15 from Prochlorococcus marinus (strain SARG / CCMP1375 / SS120).